The chain runs to 168 residues: Photosystem I assembly protein Ycf3 (168 aa).

TPR repeat units follow at residues 35 to 68, 72 to 105, and 120 to 153; these read AFTY…EIDP, SYIL…NPFL, and GEQA…TPGN.

This sequence belongs to the Ycf3 family.

Its subcellular location is the plastid. The protein localises to the chloroplast thylakoid membrane. Essential for the assembly of the photosystem I (PSI) complex. May act as a chaperone-like factor to guide the assembly of the PSI subunits. This Illicium oligandrum (Star anise) protein is Photosystem I assembly protein Ycf3.